The primary structure comprises 217 residues: U2 snRNP component ist3 (217 aa).

In terms of domain architecture, RRM spans 31-109 (AYIYIGNLDF…RLVRVDHVAS (79 aa)). 2 disordered regions span residues 119 to 138 (PANLVPLGESGSSLSVSTIN) and 154 to 217 (EVEQ…DLDG). The span at 128-138 (SGSSLSVSTIN) shows a compositional bias: polar residues. Ser-160 carries the post-translational modification Phosphoserine. Composition is skewed to basic and acidic residues over residues 161 to 176 (PKDEKDLLDPMRDYIH) and 185 to 198 (HESSDRSDKSDSNR). The segment covering 199 to 217 (HSRHHRRHSRSRRHRDLDG) has biased composition (basic residues).

This sequence belongs to the IST3 family. In terms of assembly, belongs to the 40S cdc5-associated complex (or cwf complex), a spliceosome sub-complex reminiscent of a late-stage spliceosome composed of the U2, U5 and U6 snRNAs and at least brr2, cdc5, cwf2/prp3, cwf3/syf1, cwf4/syf3, cwf5/ecm2, spp42/cwf6, cwf7/spf27, cwf8, cwf9, cwf10, cwf11, cwf12, prp45/cwf13, cwf14, cwf15, cwf16, cwf17, cwf18, cwf19, cwf20, cwf21, cwf22, cwf23, cwf24, cwf25, cwf26, cyp7/cwf27, cwf28, cwf29/ist3, lea1, msl1, prp5/cwf1, prp10, prp12/sap130, prp17, prp22, sap61, sap62, sap114, sap145, slu7, smb1, smd1, smd3, smf1, smg1 and syf2.

It is found in the nucleus. In terms of biological role, required for pre-mRNA splicing and spliceosome assembly. In Schizosaccharomyces pombe (strain 972 / ATCC 24843) (Fission yeast), this protein is U2 snRNP component ist3 (cwf29).